Here is a 511-residue protein sequence, read N- to C-terminus: Centrosomal protein CCDC61 (511 aa).

Met-1 is modified (N-acetylmethionine). The tract at residues 1 to 143 (MDQPAGLQVD…PLPLPYQGKP (143 aa)) is head domain. Coiled coils occupy residues 176–203 (IWHL…SREE) and 246–273 (SRRL…LNSE). A Phosphothreonine modification is found at Thr-283. Disordered regions lie at residues 284 to 413 (LPPV…DSFR) and 429 to 476 (SHSV…GGWV). Positions 290-302 (REGRASSSRERST) are enriched in basic and acidic residues. Residues Ser-330 and Ser-332 each carry the phosphoserine modification. The segment covering 360-369 (KQQQQQRNRM) has biased composition (low complexity). Ser-371 and Ser-374 each carry phosphoserine. Basic residues predominate over residues 433–442 (SRSRRCRGRG). Ser-446 bears the Phosphoserine mark. Over residues 449-458 (PWSRSKTKST) the composition is skewed to polar residues. At Ser-472 the chain carries Phosphoserine.

It belongs to the CCDC61 family. Forms homodimers (via head domain). Interacts with CEP170. Interacts with PCM1 and CEP131. Binds tubulin.

It localises to the cytoplasm. The protein localises to the cytoskeleton. It is found in the microtubule organizing center. Its subcellular location is the centrosome. The protein resides in the centriolar satellite. It localises to the cilium basal body. Microtubule-binding centrosomal protein required for centriole cohesion, independently of the centrosome-associated protein/CEP250 and rootletin/CROCC linker. In interphase, required for anchoring microtubule at the mother centriole subdistal appendages and for centrosome positioning. During mitosis, may be involved in spindle assembly and chromatin alignment by regulating the organization of spindle microtubules into a symmetrical structure. Plays a non-essential role in ciliogenesis. The chain is Centrosomal protein CCDC61 from Mus musculus (Mouse).